The primary structure comprises 156 residues: Small ribosomal subunit protein uS7 (156 aa).

Belongs to the universal ribosomal protein uS7 family. In terms of assembly, part of the 30S ribosomal subunit. Contacts proteins S9 and S11.

Functionally, one of the primary rRNA binding proteins, it binds directly to 16S rRNA where it nucleates assembly of the head domain of the 30S subunit. Is located at the subunit interface close to the decoding center, probably blocks exit of the E-site tRNA. This Nitratidesulfovibrio vulgaris (strain DSM 19637 / Miyazaki F) (Desulfovibrio vulgaris) protein is Small ribosomal subunit protein uS7.